We begin with the raw amino-acid sequence, 123 residues long: Large ribosomal subunit protein uL18 (123 aa).

The protein belongs to the universal ribosomal protein uL18 family. Part of the 50S ribosomal subunit; part of the 5S rRNA/L5/L18/L25 subcomplex. Contacts the 5S and 23S rRNAs.

This is one of the proteins that bind and probably mediate the attachment of the 5S RNA into the large ribosomal subunit, where it forms part of the central protuberance. The sequence is that of Large ribosomal subunit protein uL18 from Desulforudis audaxviator (strain MP104C).